A 336-amino-acid chain; its full sequence is Phosphate acyltransferase (336 aa).

It belongs to the PlsX family. Homodimer. Probably interacts with PlsY.

Its subcellular location is the cytoplasm. It catalyses the reaction a fatty acyl-[ACP] + phosphate = an acyl phosphate + holo-[ACP]. The protein operates within lipid metabolism; phospholipid metabolism. Functionally, catalyzes the reversible formation of acyl-phosphate (acyl-PO(4)) from acyl-[acyl-carrier-protein] (acyl-ACP). This enzyme utilizes acyl-ACP as fatty acyl donor, but not acyl-CoA. This Dictyoglomus turgidum (strain DSM 6724 / Z-1310) protein is Phosphate acyltransferase.